We begin with the raw amino-acid sequence, 153 residues long: UPF0756 membrane protein Bcer98_3279 (153 aa).

4 helical membrane-spanning segments follow: residues 8–28 (FLFI…IVAI), 54–74 (LGVT…EIGF), 87–107 (WIAL…LQLL), and 117–137 (LVFG…GPLI).

The protein belongs to the UPF0756 family.

The protein resides in the cell membrane. The polypeptide is UPF0756 membrane protein Bcer98_3279 (Bacillus cytotoxicus (strain DSM 22905 / CIP 110041 / 391-98 / NVH 391-98)).